Reading from the N-terminus, the 309-residue chain is Flavonol sulfotransferase-like (309 aa).

A 3'-phosphoadenylyl sulfate-binding site is contributed by 59–64 (KTGTTW). Residue H119 is the Proton acceptor of the active site. Residues R141, S149, Y207, and 274-276 (RKG) each bind 3'-phosphoadenylyl sulfate.

This sequence belongs to the sulfotransferase 1 family.

It is found in the cytoplasm. This Flaveria bidentis (Coastal plain yellowtops) protein is Flavonol sulfotransferase-like.